Here is a 478-residue protein sequence, read N- to C-terminus: PRAME family member 26 (478 aa).

An LRR 1; degenerate repeat occupies 99-126; sequence RWKLQVLDLQDVCENFWMVWSEAMARGC. An LRR 2; degenerate repeat occupies 181-205; the sequence is HLCCKKLKILGMPFRNIRSILKMVN. The stretch at 206–232 is one LRR 3; degenerate repeat; the sequence is LDCIQEVEVNCKWVLPILTQFTPYLGH. One copy of the LRR 4; degenerate repeat lies at 233-268; it reads MRNLQKLVLSHMDVSRYVSPEQKKEIVTQFTTQFLK. LRR repeat units follow at residues 269–294, 295–326, 327–347, 351–378, and 379–403; these read LHCL…LSCL, KTSL…SQLK, TLDL…QILL, AATL…ALSR, and CFEL…LLSH.

The protein belongs to the PRAME family.

This is PRAME family member 26 from Homo sapiens (Human).